Consider the following 423-residue polypeptide: 3-phosphoshikimate 1-carboxyvinyltransferase (423 aa).

Residues Lys-21, Ser-22, and Arg-26 each contribute to the 3-phosphoshikimate site. Lys-21 lines the phosphoenolpyruvate pocket. Residues Gly-92 and Arg-120 each coordinate phosphoenolpyruvate. Ser-166, Gln-168, Ser-194, Asp-310, and Lys-337 together coordinate 3-phosphoshikimate. Gln-168 provides a ligand contact to phosphoenolpyruvate. The active-site Proton acceptor is the Asp-310. Residues Arg-341, Arg-384, and Lys-409 each contribute to the phosphoenolpyruvate site.

The protein belongs to the EPSP synthase family. As to quaternary structure, monomer.

It localises to the cytoplasm. The enzyme catalyses 3-phosphoshikimate + phosphoenolpyruvate = 5-O-(1-carboxyvinyl)-3-phosphoshikimate + phosphate. It participates in metabolic intermediate biosynthesis; chorismate biosynthesis; chorismate from D-erythrose 4-phosphate and phosphoenolpyruvate: step 6/7. Catalyzes the transfer of the enolpyruvyl moiety of phosphoenolpyruvate (PEP) to the 5-hydroxyl of shikimate-3-phosphate (S3P) to produce enolpyruvyl shikimate-3-phosphate and inorganic phosphate. The protein is 3-phosphoshikimate 1-carboxyvinyltransferase of Syntrophobacter fumaroxidans (strain DSM 10017 / MPOB).